Consider the following 319-residue polypeptide: tRNA uridine(34) hydroxylase (319 aa).

A Rhodanese domain is found at 127-221 (KQEDTVIIDA…YGKDPEVQGE (95 aa)). Cys181 functions as the Cysteine persulfide intermediate in the catalytic mechanism.

It belongs to the TrhO family.

The catalysed reaction is uridine(34) in tRNA + AH2 + O2 = 5-hydroxyuridine(34) in tRNA + A + H2O. Catalyzes oxygen-dependent 5-hydroxyuridine (ho5U) modification at position 34 in tRNAs. The chain is tRNA uridine(34) hydroxylase from Bacillus cereus (strain G9842).